The sequence spans 200 residues: MTSKIFSPKISAVIESLRKLPTIGKKSSQRLALYLLDKSPETAIAIANSLLDATANIKKCVYCQALTEDDVCNICSNTNRDDTKLCIIESMLDMIAIEEAGIYRGKYFVLNGRISPLDGIGPSELKLNILQQIIADRKIDEVILAISPTVEGETTAHFISQMIVKDIKISRIGFGVPFGGELEYLDQQTLLHAFNARTNI.

The C4-type zinc finger occupies 60-75 (CVYCQALTEDDVCNIC). Residues 83-177 (TKLCIIESML…KISRIGFGVP (95 aa)) form the Toprim domain.

It belongs to the RecR family.

Its function is as follows. May play a role in DNA repair. It seems to be involved in an RecBC-independent recombinational process of DNA repair. It may act with RecF and RecO. This chain is Recombination protein RecR, found in Francisella tularensis subsp. mediasiatica (strain FSC147).